We begin with the raw amino-acid sequence, 388 residues long: MAKGNKIPLTFHTYQDAATGTEVVRLTPPDVICHRNYFYQKCFFNDGSKLLFGAAFDGPWNYYLLDLKEQNATQLTEGKGDNTFGGFLSPNDDALYYVKNTRNLMRVDLTTLEEKTIYQVPDDWVGYGTWVANSDCTKMVGIEIKKEDWKPLTDWKKFQEFYFTNPCCRLIRVDLVTGEAETILQENQWLGHPIYRPGDDNTVAFCHEGPHDLVDARMWFINEDGTNMRKVKEHAEGESCTHEFWVPDGSAMIYVSYLKDDTNRYIRSIDPVTLEDRQLRVMPPCSHLMSNYDGTLLVGDGSDAPVDVQDDGGYKIENDPFLYVFNLKTGKEHRIAQHNTSWEVLEGDRQVTHPHPSFTPDNKQVLFTSDVDGKPALYLAKVPDSVWN.

The protein resides in the periplasm. The catalysed reaction is 4-(4-deoxy-alpha-D-galact-4-enuronosyl)-D-galacturonate = 2 5-dehydro-4-deoxy-D-glucuronate. It participates in glycan metabolism; pectin degradation; 2-dehydro-3-deoxy-D-gluconate from pectin: step 3/5. Its function is as follows. Involved in degradation of pectin, which causes soft-rod disease in plants. The protein is Oligogalacturonide lyase (ogl) of Pectobacterium atrosepticum (strain SCRI 1043 / ATCC BAA-672) (Erwinia carotovora subsp. atroseptica).